The sequence spans 732 residues: Ets DNA-binding protein pokkuri (732 aa).

In terms of domain architecture, PNT spans 33–117 (SSQLAELKTQ…NVLQMLIIES (85 aa)). Residues 133-295 (SRYPLSPHSH…PPGTPILKDI (163 aa)) are disordered. Residues 141–157 (SHPPTPTWPPLNAPPEN) are compositionally biased toward pro residues. The span at 176–193 (NSVTLSPPPSVDSQASSP) shows a compositional bias: polar residues. Low complexity predominate over residues 205 to 240 (GAAPGSAGGSAPAAGGATNTSNPTSSSASSTGSNGS). Positions 396–479 (RLLWDFLQQL…QGERHCYQFL (84 aa)) form a DNA-binding region, ETS. 3 disordered regions span residues 496–548 (QSTP…NGPM), 590–647 (GPPP…TATS), and 674–732 (VAAS…HMQQ). The span at 506–539 (SPSMPQGSSQAPGSPAGQNWNPQQQSQQQQQSPQ) shows a compositional bias: low complexity. Position 543 is a phosphoserine (Ser543). Polar residues predominate over residues 637 to 647 (LSVSSKSTATS). Residues Ser677, Ser682, and Ser696 each carry the phosphoserine modification. A compositionally biased stretch (polar residues) spans 690–709 (AGASNASSSPRPMDQASEQA).

It belongs to the ETS family. Phosphorylated in response to MAPK signaling. May be phosphorylated by rl. As to expression, expressed in R7 and cone cells of the eye.

It localises to the nucleus. Functionally, ets-related protein that functions as a negative regulator of photoreceptor development acting antagonistically to pnt and the proneural signal mediated by RAS. It acts upstream of SINA to inhibit R7 development. The chain is Ets DNA-binding protein pokkuri (aop) from Drosophila melanogaster (Fruit fly).